The primary structure comprises 180 residues: tRNA (cytidine(56)-2'-O)-methyltransferase (180 aa).

S-adenosyl-L-methionine-binding positions include Leu85, 114 to 118 (GAEKV), and 132 to 139 (VGNQPHSE).

Belongs to the aTrm56 family. As to quaternary structure, homodimer.

The protein resides in the cytoplasm. The catalysed reaction is cytidine(56) in tRNA + S-adenosyl-L-methionine = 2'-O-methylcytidine(56) in tRNA + S-adenosyl-L-homocysteine + H(+). Functionally, specifically catalyzes the AdoMet-dependent 2'-O-ribose methylation of cytidine at position 56 in tRNAs. In Thermococcus kodakarensis (strain ATCC BAA-918 / JCM 12380 / KOD1) (Pyrococcus kodakaraensis (strain KOD1)), this protein is tRNA (cytidine(56)-2'-O)-methyltransferase.